A 240-amino-acid polypeptide reads, in one-letter code: Adenosylcobinamide-GDP ribazoletransferase (240 aa).

5 helical membrane-spanning segments follow: residues 31–51 (LLYYPLVGLLFGLLLWLASHL), 57–77 (APLHAALLLTAWVLLSGALHL), 109–129 (IAVVTLVLVLLLKFCALWVLV), 133–153 (VGAQLLLAPLIGRTAMLGLFL), and 185–205 (LFCLLLGGWVVLLAVAVFAWL).

Belongs to the CobS family. Mg(2+) is required as a cofactor.

Its subcellular location is the cell inner membrane. It catalyses the reaction alpha-ribazole + adenosylcob(III)inamide-GDP = adenosylcob(III)alamin + GMP + H(+). It carries out the reaction alpha-ribazole 5'-phosphate + adenosylcob(III)inamide-GDP = adenosylcob(III)alamin 5'-phosphate + GMP + H(+). It functions in the pathway cofactor biosynthesis; adenosylcobalamin biosynthesis; adenosylcobalamin from cob(II)yrinate a,c-diamide: step 7/7. Its function is as follows. Joins adenosylcobinamide-GDP and alpha-ribazole to generate adenosylcobalamin (Ado-cobalamin). Also synthesizes adenosylcobalamin 5'-phosphate from adenosylcobinamide-GDP and alpha-ribazole 5'-phosphate. The sequence is that of Adenosylcobinamide-GDP ribazoletransferase from Pseudomonas putida (strain GB-1).